The sequence spans 136 residues: Transcription antitermination protein NusB (136 aa).

The protein belongs to the NusB family.

Its function is as follows. Involved in transcription antitermination. Required for transcription of ribosomal RNA (rRNA) genes. Binds specifically to the boxA antiterminator sequence of the ribosomal RNA (rrn) operons. The polypeptide is Transcription antitermination protein NusB (Kineococcus radiotolerans (strain ATCC BAA-149 / DSM 14245 / SRS30216)).